The primary structure comprises 385 residues: Acyl-CoA dehydrogenase IpdE1 (385 aa).

FAD contacts are provided by residues 126–129 and Ser161; that span reads QGYS. The active-site Proton acceptor is the Glu244. 364–366 is a binding site for FAD; sequence SNE.

This sequence belongs to the acyl-CoA dehydrogenase family. In terms of assembly, heterotetramer composed of 2 IpdE1 subunits and 2 IpdE2 subunits. The cofactor is FAD.

The catalysed reaction is 3-[(3aS,4S,5R,7aS)-5-hydroxy-7a-methyl-1-oxo-octahydro-1H-inden-4-yl]propanoyl-CoA + A = (2E)-3-[(3aS,4S,5R,7aS)-5-hydroxy-7a-methyl-1-oxo-octahydro-1H-inden-4-yl]prop-2-enoyl-CoA + AH2. It participates in steroid metabolism; cholesterol degradation. In terms of biological role, involved in cholesterol degradation. Catalyzes the dehydrogenation of 5OH-HIP-CoA to 5OH-HIPE-CoA. Can also use octanoyl-CoA and dihydroferuloyl-CoA, with lower efficiency. Cannot use 3-oxo-4-pregnene-20-carboxyl-CoA (3-OPC-CoA). This is Acyl-CoA dehydrogenase IpdE1 from Mycobacterium tuberculosis (strain ATCC 25618 / H37Rv).